A 204-amino-acid chain; its full sequence is High frequency lysogenization protein HflD homolog (204 aa).

Belongs to the HflD family.

It is found in the cytoplasm. It localises to the cell inner membrane. The chain is High frequency lysogenization protein HflD homolog from Xanthomonas campestris pv. campestris (strain ATCC 33913 / DSM 3586 / NCPPB 528 / LMG 568 / P 25).